A 395-amino-acid chain; its full sequence is RNA demethylase ALKBH5 (395 aa).

Disordered stretches follow at residues 1–28 (MAAASGYTDLREKLKSMTSRDNYKAGSR) and 47–83 (AAEPYPASGTTKRKYQEDSDPERSDYEEHQLQKEEEA). Position 2 is an N-acetylalanine (A2). Residue K58 forms a Glycyl lysine isopeptide (Lys-Gly) (interchain with G-Cter in ubiquitin) linkage. A compositionally biased stretch (basic and acidic residues) spans 60–83 (KYQEDSDPERSDYEEHQLQKEEEA). S65 and S70 each carry phosphoserine. A coiled-coil region spans residues 68-117 (ERSDYEEHQLQKEEEARKVKSGIRQIRLFSQDECSKIEARIDEVVSRAEK). Position 72 is a phosphotyrosine (Y72). Residue K87 forms a Glycyl lysine isopeptide (Lys-Gly) (interchain with G-Cter in SUMO1) linkage. S88 bears the Phosphoserine mark. Residue K133 is modified to N6-acetyllysine. Y140 is an active-site residue. Residues N194, Y196, and H205 each coordinate 2-oxoglutarate. A disulfide bridge connects residues C231 and C268. Position 236 is an N6-acetyllysine (K236). H267 and R278 together coordinate 2-oxoglutarate. The tract at residues 294-395 (ETKSLSSSTL…PTRKVKMRRH (102 aa)) is disordered. The span at 296 to 306 (KSLSSSTLPPS) shows a compositional bias: low complexity. Residue K322 forms a Glycyl lysine isopeptide (Lys-Gly) (interchain with G-Cter in SUMO1) linkage. S326 bears the Phosphoserine mark. Residue K329 forms a Glycyl lysine isopeptide (Lys-Gly) (interchain with G-Cter in SUMO2) linkage. A compositionally biased stretch (basic and acidic residues) spans 329-350 (KADPDAAHRPRILEMDKEENRR). The residue at position 360 (R360) is an Omega-N-methylarginine. 4 positions are modified to phosphoserine: S362, S372, S375, and S385.

The protein belongs to the alkB family. As to quaternary structure, monomer. Interacts with RBM33; promoting desumoylation by SENP1 and recruitment to N(6)-methyladenosine-containing mRNAs. Interacts (when acetylated by KAT8) with PSPC1; interaction facilitates recognition of N(6)-methyladenosine (m6A) mRNA. The cofactor is Fe(2+). Post-translationally, phosphorylated at Ser-88 and Ser-326 in response to reactive oxygen species (ROS), promoting sumoylation and inactivation. In terms of processing, acetylated by KAT8 at Lys-236, promoting interaction with PSPC1, thereby facilitating recognition of N(6)-methyladenosine (m6A) mRNA by ALKBH5. Deacetylated at Lys-236 by HDAC7. Sumoylated at Lys-87 and Lys-322 by PIAS4 following phosphorylation at Ser-88 and Ser-326 in response to reactive oxygen species (ROS), inhibiting the RNA demethylase activity. Desumoylated by SENP1; relieving RNA demethylase inhibition, leading to N(6)-methyladenosine-containing mRNAs demethylation. Post-translationally, ubiquitinated at Lys-58 via 'Lys-48'-linked polyubiquitin chain, leading to its degradation by the proteasome. Deubiquitinated at Lys-58 by USP9X, promoting its stabilizazion. As to expression, widely expressed, with highest expression in testis. In testis, present in almost all testicular cell types except elongating and elongated spermatids (at protein level). Among spermatogenic cells, present at high level in spermatocytes; medium levels in spermatogonia and lower levels in round spermatids (at protein level).

It is found in the nucleus speckle. It carries out the reaction an N(6)-methyladenosine in mRNA + 2-oxoglutarate + O2 = an adenosine in mRNA + formaldehyde + succinate + CO2. RNA demethylase activity is inhibited following sumoylation. Inhibition is relieved following desumoylation. Inhibited by histone demethylase inhibitor IOX1. In terms of biological role, dioxygenase that specifically demethylates N(6)-methyladenosine (m6A) RNA, the most prevalent internal modification of messenger RNA (mRNA) in higher eukaryotes. Demethylates RNA by oxidative demethylation, which requires molecular oxygen, alpha-ketoglutarate and iron. Demethylation of m6A mRNA affects mRNA processing, translation and export. Can also demethylate N(6)-methyladenosine in single-stranded DNA (in vitro). Required for the late meiotic and haploid phases of spermatogenesis by mediating m6A demethylation in spermatocytes and round spermatids: m6A demethylation of target transcripts is required for correct splicing and the production of longer 3'-UTR mRNAs in male germ cells. Involved in paraspeckle assembly, a nuclear membraneless organelle, by undergoing liquid-liquid phase separation. Paraspeckle assembly is coupled with m6A demethylation of RNAs, such as NEAT1 non-coding RNA. Also acts as a negative regulator of T-cell development: inhibits gamma-delta T-cell proliferation via demethylation of JAG1 and NOTCH2 transcripts. Inhibits regulatory T-cell (Treg) recruitment by mediating demethylation and destabilization of CCL28 mRNAs. The protein is RNA demethylase ALKBH5 of Mus musculus (Mouse).